The chain runs to 294 residues: ATP synthase gamma chain (294 aa).

Belongs to the ATPase gamma chain family. As to quaternary structure, F-type ATPases have 2 components, CF(1) - the catalytic core - and CF(0) - the membrane proton channel. CF(1) has five subunits: alpha(3), beta(3), gamma(1), delta(1), epsilon(1). CF(0) has three main subunits: a, b and c.

The protein localises to the cell membrane. In terms of biological role, produces ATP from ADP in the presence of a proton gradient across the membrane. The gamma chain is believed to be important in regulating ATPase activity and the flow of protons through the CF(0) complex. The chain is ATP synthase gamma chain from Ruminiclostridium cellulolyticum (strain ATCC 35319 / DSM 5812 / JCM 6584 / H10) (Clostridium cellulolyticum).